A 455-amino-acid chain; its full sequence is Pup--protein ligase (455 aa).

Residue E12 coordinates Mg(2+). Residue R56 coordinates ATP. Y58 contacts Mg(2+). D60 acts as the Proton acceptor in catalysis. Position 66 (E66) interacts with Mg(2+). ATP-binding residues include T69 and W422.

The protein belongs to the Pup ligase/Pup deamidase family. Pup-conjugating enzyme subfamily.

The catalysed reaction is ATP + [prokaryotic ubiquitin-like protein]-L-glutamate + [protein]-L-lysine = ADP + phosphate + N(6)-([prokaryotic ubiquitin-like protein]-gamma-L-glutamyl)-[protein]-L-lysine.. The protein operates within protein degradation; proteasomal Pup-dependent pathway. It participates in protein modification; protein pupylation. In terms of biological role, catalyzes the covalent attachment of the prokaryotic ubiquitin-like protein modifier Pup to the proteasomal substrate proteins, thereby targeting them for proteasomal degradation. This tagging system is termed pupylation. The ligation reaction involves the side-chain carboxylate of the C-terminal glutamate of Pup and the side-chain amino group of a substrate lysine. This is Pup--protein ligase from Acidimicrobium ferrooxidans (strain DSM 10331 / JCM 15462 / NBRC 103882 / ICP).